The chain runs to 97 residues: U6-theraphotoxin-Hhn1a 3 (97 aa).

Residues 1–33 form the signal peptide; sequence MLIKQFSRRSKNTKVQILLAFAALFVLAVGSYA. Residues 34 to 61 constitute a propeptide that is removed on maturation; sequence SESKKLDLRDALFSAMFSADYQLNPQER. 3 cysteine pairs are disulfide-bonded: Cys-63/Cys-77, Cys-70/Cys-82, and Cys-76/Cys-89.

Belongs to the neurotoxin 10 (Hwtx-1) family. 12 (Hntx-12) subfamily. Expressed by the venom gland.

It localises to the secreted. In terms of biological role, ion channel inhibitor. The sequence is that of U6-theraphotoxin-Hhn1a 3 from Cyriopagopus hainanus (Chinese bird spider).